We begin with the raw amino-acid sequence, 135 residues long: CDGSH iron-sulfur domain-containing protein 2B (135 aa).

The Lumenal portion of the chain corresponds to 1–37 (MVLETISKIIKTQLPAYLKKFPLPETIGGFARLTVLD). Residues 38-60 (WLRLLPLLGILTLLGYLTIRPFL) traverse the membrane as a helical segment. The Cytoplasmic portion of the chain corresponds to 61–135 (PKKKKQKDSL…GPLILKKKII (75 aa)). 4 residues coordinate [2Fe-2S] cluster: Cys99, Cys101, Cys110, and His114.

This sequence belongs to the CISD protein family. CISD2 subfamily. As to quaternary structure, homodimer. It depends on [2Fe-2S] cluster as a cofactor.

The protein localises to the endoplasmic reticulum membrane. It is found in the mitochondrion outer membrane. Regulator of autophagy that contributes to antagonize becn1-mediated cellular autophagy at the endoplasmic reticulum. Participates in the interaction of bcl2 with becn1 and is required for bcl2-mediated depression of endoplasmic reticulum Ca(2+) stores during autophagy. The sequence is that of CDGSH iron-sulfur domain-containing protein 2B (cisd2b) from Oncorhynchus mykiss (Rainbow trout).